A 473-amino-acid chain; its full sequence is MKRRVGGLETEYGLVCVRADGSRALEPEAAARELFRPVVAMGRSSNVFLRNAARLYLDVGSHPEYATAECDDWWELVAQDRAGDRMFAELAAEATERLAADGQDARIHLLKNNVDSAGNAFGSHENYLVDRRGEFTRLPRYLLPFLVTRQIVTGAGGVVRPAPADGAPEQEAGPAQFVFSRRSDHMWEAVSSATTRTRPIINTRDEPHGDPTRFRRLHVIVGDSTMSEVSTHLRFATTDLVLRAIESGRALPELALHDDIAAIRAVARDLTGTTAIPTADGGTTTAIEVQQRWLDHVTEFADESEQDVLETWQRGIDAVRTGDRSWAATHLDWAIKERLFHQVAERRGVDLGDPAIERLDLAYHDIDPTQSVFAALQRRGLAPQVLDEQRIERARTTAPTTTRAHLRGQVVTAAQEHGVDHVVDWTTLRLTRPGAMPVQVLDPFATELPAVDALLEEIRASAAGAPESPPPFA.

Glutamate 9 contacts Mg(2+). An ATP-binding site is contributed by arginine 54. A Mg(2+)-binding site is contributed by tyrosine 56. The Proton acceptor role is filled by aspartate 58. Glutamate 64 contributes to the Mg(2+) binding site. ATP is bound by residues threonine 67 and tryptophan 425.

The protein belongs to the Pup ligase/Pup deamidase family. Pup-conjugating enzyme subfamily.

The enzyme catalyses ATP + [prokaryotic ubiquitin-like protein]-L-glutamate + [protein]-L-lysine = ADP + phosphate + N(6)-([prokaryotic ubiquitin-like protein]-gamma-L-glutamyl)-[protein]-L-lysine.. The protein operates within protein degradation; proteasomal Pup-dependent pathway. It functions in the pathway protein modification; protein pupylation. Its function is as follows. Catalyzes the covalent attachment of the prokaryotic ubiquitin-like protein modifier Pup to the proteasomal substrate proteins, thereby targeting them for proteasomal degradation. This tagging system is termed pupylation. The ligation reaction involves the side-chain carboxylate of the C-terminal glutamate of Pup and the side-chain amino group of a substrate lysine. The sequence is that of Pup--protein ligase from Brachybacterium faecium (strain ATCC 43885 / DSM 4810 / JCM 11609 / LMG 19847 / NBRC 14762 / NCIMB 9860 / 6-10).